Consider the following 311-residue polypeptide: Ribosomal RNA small subunit methyltransferase H (311 aa).

S-adenosyl-L-methionine-binding positions include 32–34, Asp-52, Phe-79, Asp-100, and Gln-107; that span reads AGH.

It belongs to the methyltransferase superfamily. RsmH family.

The protein localises to the cytoplasm. The enzyme catalyses cytidine(1402) in 16S rRNA + S-adenosyl-L-methionine = N(4)-methylcytidine(1402) in 16S rRNA + S-adenosyl-L-homocysteine + H(+). Functionally, specifically methylates the N4 position of cytidine in position 1402 (C1402) of 16S rRNA. This chain is Ribosomal RNA small subunit methyltransferase H, found in Staphylococcus carnosus (strain TM300).